Consider the following 458-residue polypeptide: Flap endonuclease 1 (458 aa).

Residues Met1–Arg105 are N-domain. Asp34 provides a ligand contact to Mg(2+). The DNA site is built by Arg47 and Arg71. Positions 87, 159, 161, 180, and 182 each coordinate Mg(2+). Residues Asp123–Phe254 are I-domain. Position 159 (Glu159) interacts with DNA. DNA-binding residues include Gly232 and Asp234. Residue Asp234 coordinates Mg(2+). Disordered stretches follow at residues Ala268–Glu347 and Gly416–Lys458. Acidic residues-rich tracts occupy residues Ala275–Glu285 and Glu293–Glu309. The segment covering Ala310–Lys329 has biased composition (basic and acidic residues). The tract at residues Gln410–Phe418 is interaction with PCNA. Over residues Arg442–Gly452 the composition is skewed to basic and acidic residues.

This sequence belongs to the XPG/RAD2 endonuclease family. FEN1 subfamily. Interacts with PCNA. Three molecules of FEN1 bind to one PCNA trimer with each molecule binding to one PCNA monomer. PCNA stimulates the nuclease activity without altering cleavage specificity. Mg(2+) serves as cofactor. Phosphorylated. Phosphorylation upon DNA damage induces relocalization to the nuclear plasma.

It is found in the nucleus. The protein resides in the nucleolus. It localises to the nucleoplasm. Its subcellular location is the mitochondrion. Its function is as follows. Structure-specific nuclease with 5'-flap endonuclease and 5'-3' exonuclease activities involved in DNA replication and repair. During DNA replication, cleaves the 5'-overhanging flap structure that is generated by displacement synthesis when DNA polymerase encounters the 5'-end of a downstream Okazaki fragment. It enters the flap from the 5'-end and then tracks to cleave the flap base, leaving a nick for ligation. Also involved in the long patch base excision repair (LP-BER) pathway, by cleaving within the apurinic/apyrimidinic (AP) site-terminated flap. Acts as a genome stabilization factor that prevents flaps from equilibrating into structures that lead to duplications and deletions. Also possesses 5'-3' exonuclease activity on nicked or gapped double-stranded DNA, and exhibits RNase H activity. Also involved in replication and repair of rDNA and in repairing mitochondrial DNA. This Coprinopsis cinerea (strain Okayama-7 / 130 / ATCC MYA-4618 / FGSC 9003) (Inky cap fungus) protein is Flap endonuclease 1.